Consider the following 369-residue polypeptide: Trichocyst matrix protein T1-B (369 aa).

The first 16 residues, 1–16 (MYKLAVCTLLILSVTA), serve as a signal peptide directing secretion. Residues 17–55 (IDVTNSVWTSHDQKAFAQIKQSGWGNFILNFGELHLQTG) constitute a propeptide that is removed on maturation. Positions 56–180 (GILAELNTEI…AIDESLQLLS (125 aa)) form a coiled coil. Positions 190 to 225 (IQKVQKNLTKIQQSLKRHSTFQTFIKTLLEIAVEAN) are excised as a propeptide. Residues 262–354 (KDFEARVIQL…AHQALDLLNQ (93 aa)) adopt a coiled-coil conformation.

The protein belongs to the TMP family. Two components are produced by post-translational processing from the precursor peptide.

The protein resides in the trichocyst. Structural protein that crystallize inside the trichocyst matrix. The protein is Trichocyst matrix protein T1-B (T1B) of Paramecium tetraurelia.